We begin with the raw amino-acid sequence, 136 residues long: uncharacterized protein (136 aa).

Residues 19–39 traverse the membrane as a helical segment; it reads LGFPLGTALLLIIIFSLSGIF. 2 disordered regions span residues 54-87 and 112-136; these read SLANGRPSADIESNPYKPKPPFPEMKKPQNLSVP and KLTVDVQTPPQSPPVKPARFPVPLY.

The protein resides in the membrane. This is an uncharacterized protein from Arabidopsis thaliana (Mouse-ear cress).